The sequence spans 241 residues: MTMPFGYASPEQQVRDKSEYARKGIARGRSVVVLTYVDGILFVAENPSTTLHKISEMYDRIGFAAVGKYNEFENLRTAGIRIMDTRGYMYDRRDVTSRALANAYAQTLGAIFTESIKPYEVEIVVAEVGHTAADDQIFRLTYDGSIADERGFIAIGGQSEQVLTSLREHHTEGQPLATALRVAVDALTAGAPPGAQNGERTLTAGNLEVAMLDRKRSRRLFKRIVGSQLDGLLEETAPSAS.

It belongs to the peptidase T1A family. The 20S proteasome core is composed of 14 alpha and 14 beta subunits that assemble into four stacked heptameric rings, resulting in a barrel-shaped structure. The two inner rings, each composed of seven catalytic beta subunits, are sandwiched by two outer rings, each composed of seven alpha subunits. The catalytic chamber with the active sites is on the inside of the barrel. Has a gated structure, the ends of the cylinder being occluded by the N-termini of the alpha-subunits. Is capped by the proteasome-associated ATPase, ARC.

The protein localises to the cytoplasm. It functions in the pathway protein degradation; proteasomal Pup-dependent pathway. Its activity is regulated as follows. The formation of the proteasomal ATPase ARC-20S proteasome complex, likely via the docking of the C-termini of ARC into the intersubunit pockets in the alpha-rings, may trigger opening of the gate for substrate entry. Interconversion between the open-gate and close-gate conformations leads to a dynamic regulation of the 20S proteasome proteolysis activity. Functionally, component of the proteasome core, a large protease complex with broad specificity involved in protein degradation. The protein is Proteasome subunit alpha of Parafrankia sp. (strain EAN1pec).